The following is a 713-amino-acid chain: Denticleless protein homolog (713 aa).

WD repeat units lie at residues 47–89 (GAAV…VQRL), 96–135 (AHTN…LIGE), and 138–178 (GHQC…KDGF). Positions 168-171 (WDTR) match the DDB1-binding motif motif. Residues 197 to 204 (PSKVKKRK) carry the Nuclear localization signal motif. WD repeat units follow at residues 215-254 (DSQQ…SAYR), 270-309 (TRKL…TEPV), 314-355 (GHQN…VPPV), and 359-399 (GHCQ…EDSA). The DDB1-binding motif signature appears at 244-247 (WDLR). Disordered regions lie at residues 474-544 (TPQR…EKRA), 604-623 (GFDQ…NGTV), and 635-700 (SDLR…TPGS). 2 stretches are compositionally biased toward polar residues: residues 504 to 516 (TPKS…TKTP) and 612 to 623 (GPSTSFLINGTV). The segment covering 635 to 644 (SDLRDKENSS) has biased composition (basic and acidic residues). The span at 686–699 (NAPNSPVSVPTTPG) shows a compositional bias: polar residues.

Belongs to the WD repeat cdt2 family. As to quaternary structure, component of the DCX(DTL) E3 ubiquitin ligase complex, at least composed of cul4 (cul4a or cul4b), ddb1, dtl/cdt2 and rbx1.

The protein localises to the nucleus. It is found in the cytoplasm. It localises to the cytoskeleton. The protein resides in the microtubule organizing center. Its subcellular location is the centrosome. The protein localises to the chromosome. Its pathway is protein modification; protein ubiquitination. Its function is as follows. Substrate-specific adapter of a DCX (DDB1-CUL4-X-box) E3 ubiquitin-protein ligase complex required for cell cycle control, DNA damage response and translesion DNA synthesis. The DCX(DTL) complex, also named CRL4(CDT2) complex, mediates the polyubiquitination and subsequent degradation of CDT1, CDKN1A/p21(CIP1), KMT5A and SDE2. CDT1 degradation in response to DNA damage is necessary to ensure proper cell cycle regulation of DNA replication. CDKN1A/p21(CIP1) degradation during S phase or following UV irradiation is essential to control replication licensing. KMT5A degradation is also important for a proper regulation of mechanisms such as TGF-beta signaling, cell cycle progression, DNA repair and cell migration. Most substrates require their interaction with PCNA for their polyubiquitination: substrates interact with PCNA via their PIP-box, and those containing the 'K+4' motif in the PIP box, recruit the DCX(DTL) complex, leading to their degradation. In undamaged proliferating cells, the DCX(DTL) complex also promotes the 'Lys-164' monoubiquitination of PCNA, thereby being involved in PCNA-dependent translesion DNA synthesis. May play a role in the regulation of the circadian clock. In Xenopus tropicalis (Western clawed frog), this protein is Denticleless protein homolog (dtl).